Here is a 551-residue protein sequence, read N- to C-terminus: MEEAELVKERLQAITDKRKIQEEISQKRLKIEEEKLRHQHLKKKALREKWLLDGIGSRKEQEEMKKQNQQDQHQIQVLEQSILRLEKEIQDLEKAELQISTNEEAILKKLKSVERTTEDIIRSVKVEKEETSGASIEDIYANIPDLPKSYVPSRLRKERNEGIEDDEQNRKALYAMEIKVEKDLKTGESTVLSSIPLPSDDFKGTGIKVYDDGQKSVYAVSSNHSAAYNGTDGLAPVEVEDLLRQASERNSKSPTEYHDPVYANPFCRPTTPQREKATPGPNFQERIKMKARGLGKDMNGSIHTMNNGLSEERGSSVNHISPIRPIPHPRSMTQQAEERPHSPQKRQMTPWEESDVTQDKCAPSAKSQLSPGEAPVGKSERQGSSPTCQEDEEDVRYNIVHSLPSDVEDTEPVTMIFMGYQRADDSEEEKKLLTGYDGIIRAELVVIDDEEEEGEGEAEKPSYHPIAPHSQVFQPAKPTPLPRKRAEVNPHENTNHKSPHKNSISLKEQEESLGSPIHQSPLDIQIAGDGTEDPSLTALRMRMAKLGKKVI.

N-acetylmethionine is present on M1. Residues 2-106 (EEAELVKERL…LQISTNEEAI (105 aa)) are a coiled coil. K125 is covalently cross-linked (Glycyl lysine isopeptide (Lys-Gly) (interchain with G-Cter in SUMO2)). Residue S135 is modified to Phosphoserine. Residue K179 forms a Glycyl lysine isopeptide (Lys-Gly) (interchain with G-Cter in SUMO1); alternate linkage. K179 participates in a covalent cross-link: Glycyl lysine isopeptide (Lys-Gly) (interchain with G-Cter in SUMO2); alternate. Residues 247–259 (SERNSKSPTEYHD) show a composition bias toward basic and acidic residues. Disordered stretches follow at residues 247 to 393 (SERN…EDEE) and 450 to 529 (EEEE…IAGD). T271 is modified (phosphothreonine). Phosphoserine is present on residues S321, S370, S384, and S385. Over residues 484 to 495 (KRAEVNPHENTN) the composition is skewed to basic and acidic residues. S498, S515, and S520 each carry phosphoserine.

This sequence belongs to the paralemmin family. Interacts with GLUL. Cell projection, dendrite. Cell projection, dendritic spine. In terms of processing, phosphorylated.

It is found in the cytoplasm. Its subcellular location is the cell projection. The protein resides in the dendrite. It localises to the dendritic spine. This is Palmdelphin (PALMD) from Sus scrofa (Pig).